The sequence spans 617 residues: Dihydroxy-acid dehydratase (617 aa).

Asp-81 contributes to the Mg(2+) binding site. Position 122 (Cys-122) interacts with [2Fe-2S] cluster. Residues Asp-123 and Lys-124 each contribute to the Mg(2+) site. Lys-124 carries the N6-carboxylysine modification. Cys-195 is a binding site for [2Fe-2S] cluster. Glu-490 is a Mg(2+) binding site. Ser-516 acts as the Proton acceptor in catalysis.

It belongs to the IlvD/Edd family. Homodimer. [2Fe-2S] cluster is required as a cofactor. It depends on Mg(2+) as a cofactor.

The enzyme catalyses (2R)-2,3-dihydroxy-3-methylbutanoate = 3-methyl-2-oxobutanoate + H2O. It carries out the reaction (2R,3R)-2,3-dihydroxy-3-methylpentanoate = (S)-3-methyl-2-oxopentanoate + H2O. It participates in amino-acid biosynthesis; L-isoleucine biosynthesis; L-isoleucine from 2-oxobutanoate: step 3/4. It functions in the pathway amino-acid biosynthesis; L-valine biosynthesis; L-valine from pyruvate: step 3/4. Functions in the biosynthesis of branched-chain amino acids. Catalyzes the dehydration of (2R,3R)-2,3-dihydroxy-3-methylpentanoate (2,3-dihydroxy-3-methylvalerate) into 2-oxo-3-methylpentanoate (2-oxo-3-methylvalerate) and of (2R)-2,3-dihydroxy-3-methylbutanoate (2,3-dihydroxyisovalerate) into 2-oxo-3-methylbutanoate (2-oxoisovalerate), the penultimate precursor to L-isoleucine and L-valine, respectively. The chain is Dihydroxy-acid dehydratase from Acidiphilium cryptum (strain JF-5).